A 453-amino-acid chain; its full sequence is MKGISKILSASIMVMKLGNVYSAVPLCSNTYDPSQQQPSYVLIPSTPEAITNCAYSPKNAYVPSSPTTSSSTPGTNNDNETSPTTEDVGTCKISVVKHCDTPGASSTPCEPEQTIPAQPVTMATVTPAIIASVQTPSVVSVIPVTQKVIQPATMIVPPSSIIPGYYPNGTPAAPGQQGQILSGSVLAPGASSCQLVPGNTPGQMLPGMTPGVSPCLPTQGGDGSNQTIPGIVYPCQPGQGGSGSNQTIPGVISPCQPGQGGSGSNQTIPGIVYPCQPGQGGSGSNQTIPGVISPCQPGQGGSGSNQTIPGIVYPCQPGQNGDGSNQTIPGVISPCQPGQGGNGNGTTGQPGQCVSVPQTPNPIAMPPISGISGNGYPTSTTYTQSLGQLGPCIDVQKPTSSCESQTNEKSTMQYAMEACAAPTPTVVIGNSEYLVGPGMYSSLTSPCNSCCQC.

The signal sequence occupies residues 1–22; it reads MKGISKILSASIMVMKLGNVYS. The tract at residues 61–87 is disordered; sequence YVPSSPTTSSSTPGTNNDNETSPTTED. Residues 63-73 are compositionally biased toward low complexity; sequence PSSPTTSSSTP. The segment covering 74–87 has biased composition (polar residues); sequence GTNNDNETSPTTED. N-linked (GlcNAc...) asparagine glycans are attached at residues N79, N225, N245, N265, N285, N305, N325, and N344. A run of 6 repeats spans residues 214 to 233, 234 to 253, 254 to 273, 274 to 293, 294 to 313, and 314 to 333. Positions 214–333 are 6 X 20 AA approximate tandem repeats; the sequence is PCLPTQGGDG…SNQTIPGVIS (120 aa).

Post-translationally, O-mannosylated. O-mannosylation has functional significance for the ability of microsporidia to invade their host cells.

Its subcellular location is the spore polar tube. In terms of biological role, involved in formation of a polar tube through which the infectious agent is passed on to the host cell. This is Polar tube protein 1 (PTP1) from Encephalitozoon hellem (Microsporidian parasite).